The chain runs to 105 residues: Antitoxin HigA-1 (105 aa).

An HTH cro/C1-type domain is found at leucine 15–tryptophan 69. Positions serine 27–asparagine 46 form a DNA-binding region, H-T-H motif.

Its function is as follows. Antitoxin component of a type II toxin-antitoxin (TA) system that counteracts the effect of the HigB-1 toxin. Binds to its own promoter and regulates transcription of the higB-1/higA-1 operon. This is Antitoxin HigA-1 (higA-1) from Vibrio cholerae serotype O1 (strain ATCC 39315 / El Tor Inaba N16961).